Consider the following 339-residue polypeptide: Phenylalanine--tRNA ligase alpha subunit (339 aa).

Glutamate 250 lines the Mg(2+) pocket.

It belongs to the class-II aminoacyl-tRNA synthetase family. Phe-tRNA synthetase alpha subunit type 1 subfamily. In terms of assembly, tetramer of two alpha and two beta subunits. The cofactor is Mg(2+).

It localises to the cytoplasm. The catalysed reaction is tRNA(Phe) + L-phenylalanine + ATP = L-phenylalanyl-tRNA(Phe) + AMP + diphosphate + H(+). The polypeptide is Phenylalanine--tRNA ligase alpha subunit (Christiangramia forsetii (strain DSM 17595 / CGMCC 1.15422 / KT0803) (Gramella forsetii)).